Reading from the N-terminus, the 347-residue chain is S-adenosylmethionine:tRNA ribosyltransferase-isomerase (347 aa).

The protein belongs to the QueA family. In terms of assembly, monomer.

The protein resides in the cytoplasm. It carries out the reaction 7-aminomethyl-7-carbaguanosine(34) in tRNA + S-adenosyl-L-methionine = epoxyqueuosine(34) in tRNA + adenine + L-methionine + 2 H(+). Its pathway is tRNA modification; tRNA-queuosine biosynthesis. Transfers and isomerizes the ribose moiety from AdoMet to the 7-aminomethyl group of 7-deazaguanine (preQ1-tRNA) to give epoxyqueuosine (oQ-tRNA). The chain is S-adenosylmethionine:tRNA ribosyltransferase-isomerase from Treponema denticola (strain ATCC 35405 / DSM 14222 / CIP 103919 / JCM 8153 / KCTC 15104).